Consider the following 306-residue polypeptide: TnpB-like protein aq_aa05 (306 aa).

Residues Cys-213, Cys-216, Cys-234, and Cys-237 each coordinate Zn(2+).

This sequence belongs to the transposase 35 family.

The polypeptide is TnpB-like protein aq_aa05 (Aquifex aeolicus (strain VF5)).